The chain runs to 100 residues: Large ribosomal subunit protein uL23 (100 aa).

This sequence belongs to the universal ribosomal protein uL23 family. In terms of assembly, part of the 50S ribosomal subunit. Contacts protein L29, and trigger factor when it is bound to the ribosome.

One of the early assembly proteins it binds 23S rRNA. One of the proteins that surrounds the polypeptide exit tunnel on the outside of the ribosome. Forms the main docking site for trigger factor binding to the ribosome. The sequence is that of Large ribosomal subunit protein uL23 from Yersinia enterocolitica serotype O:8 / biotype 1B (strain NCTC 13174 / 8081).